A 274-amino-acid polypeptide reads, in one-letter code: UPF0173 metal-dependent hydrolase A2cp1_1196 (274 aa).

It belongs to the UPF0173 family.

This Anaeromyxobacter dehalogenans (strain 2CP-1 / ATCC BAA-258) protein is UPF0173 metal-dependent hydrolase A2cp1_1196.